A 284-amino-acid chain; its full sequence is RNase adapter protein RapZ (284 aa).

8 to 15 (GRSGSGKS) contacts ATP. 56 to 59 (DVRN) contributes to the GTP binding site. The RNA-binding stretch occupies residues 266–284 (RSRGKNVQSRHRTLEKRKT).

The protein belongs to the RapZ-like family. RapZ subfamily. Homotrimer.

Functionally, modulates the synthesis of GlmS, by affecting the processing and stability of the regulatory small RNA GlmZ. When glucosamine-6-phosphate (GlcN6P) concentrations are high in the cell, RapZ binds GlmZ and targets it to cleavage by RNase E. Consequently, GlmZ is inactivated and unable to activate GlmS synthesis. Under low GlcN6P concentrations, RapZ is sequestered and inactivated by an other regulatory small RNA, GlmY, preventing GlmZ degradation and leading to synthesis of GlmS. This is RNase adapter protein RapZ from Salmonella typhi.